The following is a 489-amino-acid chain: MSRRNSKVLYVSGEVAPFVRITALADFMASFPQTVEDEGFEARIMMPKYGIINDRKFRLHDVLRLSDIEVHLKDKVDMLDVKVTALPSSKIQTYFLYNEKYFKRHAWFPDLSTGNDARVTVEKIVFFNVGVLETLLRLGWKPDIIHCNDWHTALIPLLLKTMYASHEFFRNVKTLFSIHNAYRQGNFPLKHFQRLLPDEVCAGLHCVKDEVNLLFTGIDHVELLTTTSPRYAECLRGDTPEAFGVGKRLLERELPLHGMVNGLDARQWNPAIDKMIKKRYSTENMNGKVENRKMLLEEMKLPWRDGMPLVGFIATFDDYQGAKLLADSLEKLIAQDIQLVIIGFGDKKCEQRFQEFVVAHPEQVSVQAECSDSFLHLAIAGLDLLLMPSKVESCGMLQMSAMTYGTIPIARATGGIVETIQDHGENLGTGFLFDDYSVEGLSGRLADALRCFHDDECWPALVERAMSSDFSWHNTAEAYGQLYRNLLGK.

Arg20 lines the ADP-alpha-D-glucose pocket.

The protein belongs to the glycosyltransferase 1 family. Bacterial/plant glycogen synthase subfamily.

The catalysed reaction is [(1-&gt;4)-alpha-D-glucosyl](n) + ADP-alpha-D-glucose = [(1-&gt;4)-alpha-D-glucosyl](n+1) + ADP + H(+). It functions in the pathway glycan biosynthesis; glycogen biosynthesis. In terms of biological role, synthesizes alpha-1,4-glucan chains using ADP-glucose. This is Glycogen synthase from Chlorobium chlorochromatii (strain CaD3).